The primary structure comprises 142 residues: Baculoviral IAP repeat-containing protein 5 (142 aa).

A BIR repeat occupies 18 to 88; it reads RISTFKNWPF…KHSSGCAFLS (71 aa). At Ser-20 the chain carries Phosphoserine; by AURKC. Lys-23 bears the N6-acetyllysine mark. At Thr-34 the chain carries Phosphothreonine; by CDK1 and CDK15. The residue at position 48 (Thr-48) is a Phosphothreonine. Positions 57, 60, 77, and 84 each coordinate Zn(2+). 4 positions are modified to N6-acetyllysine: Lys-90, Lys-110, Lys-112, and Lys-115. Thr-117 bears the Phosphothreonine; by AURKB mark. At Lys-129 the chain carries N6-acetyllysine.

This sequence belongs to the IAP family. Monomer or homodimer. Exists as a homodimer in the apo state and as a monomer in the CPC-bound state. The monomer protects cells against apoptosis more efficiently than the dimer. Only the dimeric form is capable of enhancing tubulin stability in cells. When phosphorylated, interacts with LAMTOR5/HBXIP; the resulting complex binds pro-CASP9, as well as active CASP9, but much less efficiently. Component of the chromosomal passenger complex (CPC) composed of at least BIRC5/survivin, CDCA8/borealin, INCENP, AURKB or AURKC; in the complex forms a triple-helix bundle-based subcomplex with INCENP and CDCA8. Interacts with JTB. Interacts (via BIR domain) with histone H3 phosphorylated at 'Thr-3' (H3pT3). Interacts with EVI5. Interacts with GTP-bound RAN in both the S and M phases of the cell cycle. Interacts with USP9X. Interacts with tubulin. Interacts with BIRC2/c-IAP1. The acetylated form at Lys-129 interacts with STAT3. The monomeric form deacetylated at Lys-129 interacts with XPO1/CRM1. The monomeric form interacts with XIAP/BIRC4. Both the dimeric and monomeric form can interact with DIABLO/SMAC. Interacts with BIRC6/bruce. Interacts with FBXL7; this interaction facilitates the polyubiquitination and subsequent proteasomal degradation of BIRC5 by the SCF(FBXL7) E3 ubiquitin-protein ligase complex. Ubiquitinated by the Cul9-RING ubiquitin-protein ligase complex, leading to its degradation. Ubiquitination is required for centrosomal targeting. Deubiquitinated by USP35 or USP38; leading to stabilization. Post-translationally, acetylation at Lys-129 results in its homodimerization, while deacetylation promotes the formation of monomers which heterodimerize with XPO1/CRM1 which facilitates its nuclear export. The acetylated form represses STAT3 transactivation. The dynamic equilibrium between its acetylation and deacetylation at Lys-129 determines its interaction with XPO1/CRM1, its subsequent subcellular localization, and its ability to inhibit STAT3 transactivation. In terms of processing, in vitro phosphorylation at Thr-117 by AURKB prevents interaction with INCENP and localization to mitotic chromosomes. Phosphorylation at Thr-48 by CK2 is critical for its mitotic and anti-apoptotic activities. Phosphorylation at Thr-34 by CDK15 is critical for its anti-apoptotic activity. Phosphorylation at Ser-20 by AURKC is critical for regulation of proper chromosome alignment and segregation, and possibly cytokinesis.

Its subcellular location is the cytoplasm. It is found in the nucleus. The protein resides in the chromosome. The protein localises to the centromere. It localises to the cytoskeleton. Its subcellular location is the spindle. It is found in the kinetochore. The protein resides in the midbody. Its function is as follows. Multitasking protein that has dual roles in promoting cell proliferation and preventing apoptosis. Component of a chromosome passage protein complex (CPC) which is essential for chromosome alignment and segregation during mitosis and cytokinesis. Acts as an important regulator of the localization of this complex; directs CPC movement to different locations from the inner centromere during prometaphase to midbody during cytokinesis and participates in the organization of the center spindle by associating with polymerized microtubules. Involved in the recruitment of CPC to centromeres during early mitosis via association with histone H3 phosphorylated at 'Thr-3' (H3pT3) during mitosis. The complex with RAN plays a role in mitotic spindle formation by serving as a physical scaffold to help deliver the RAN effector molecule TPX2 to microtubules. May counteract a default induction of apoptosis in G2/M phase. The acetylated form represses STAT3 transactivation of target gene promoters. May play a role in neoplasia. Inhibitor of CASP3 and CASP7. Essential for the maintenance of mitochondrial integrity and function. This Pongo abelii (Sumatran orangutan) protein is Baculoviral IAP repeat-containing protein 5 (BIRC5).